The chain runs to 294 residues: 33 kDa chaperonin (294 aa).

2 disulfide bridges follow: Cys231-Cys233 and Cys264-Cys267.

This sequence belongs to the HSP33 family. Under oxidizing conditions two disulfide bonds are formed involving the reactive cysteines. Under reducing conditions zinc is bound to the reactive cysteines and the protein is inactive.

It localises to the cytoplasm. In terms of biological role, redox regulated molecular chaperone. Protects both thermally unfolding and oxidatively damaged proteins from irreversible aggregation. Plays an important role in the bacterial defense system toward oxidative stress. This Aeromonas salmonicida (strain A449) protein is 33 kDa chaperonin.